Reading from the N-terminus, the 488-residue chain is GTPase Der (488 aa).

2 consecutive EngA-type G domains span residues Pro-3–Pro-166 and Ile-193–Val-366. GTP is bound by residues Gly-9–Ser-16, Asp-56–Ile-60, Asn-118–Asp-121, Gly-199–Ser-206, Asp-246–Val-250, and Asn-311–Asp-314. The KH-like domain occupies Thr-367–Asp-451. Residues Gly-449–Leu-461 show a composition bias toward basic and acidic residues. The segment at Gly-449–Lys-488 is disordered. Positions Asn-467 to Lys-488 are enriched in basic residues.

The protein belongs to the TRAFAC class TrmE-Era-EngA-EngB-Septin-like GTPase superfamily. EngA (Der) GTPase family. Associates with the 50S ribosomal subunit.

In terms of biological role, GTPase that plays an essential role in the late steps of ribosome biogenesis. The protein is GTPase Der of Pseudomonas entomophila (strain L48).